A 61-amino-acid chain; its full sequence is Large ribosomal subunit protein bL32 (61 aa).

Positions 1–16 are enriched in basic residues; it reads MAVPKRKTSPSKRGMR. The segment at 1–61 is disordered; the sequence is MAVPKRKTSP…RQVLTPKESA (61 aa). The span at 28–44 shows a compositional bias: basic and acidic residues; it reads VEDKNSGELRRPHHIDL.

Belongs to the bacterial ribosomal protein bL32 family.

The sequence is that of Large ribosomal subunit protein bL32 from Rhizobium etli (strain CIAT 652).